The sequence spans 401 residues: Argininosuccinate synthase (401 aa).

An ATP-binding site is contributed by 9–17 (AYSGGLDTS). Tyrosine 86 contributes to the L-citrulline binding site. Glycine 116 contributes to the ATP binding site. Residues threonine 118, asparagine 122, and aspartate 123 each contribute to the L-aspartate site. Asparagine 122 lines the L-citrulline pocket. L-citrulline-binding residues include arginine 126, serine 174, serine 183, glutamate 259, and tyrosine 271.

It belongs to the argininosuccinate synthase family. Type 1 subfamily. As to quaternary structure, homotetramer.

It is found in the cytoplasm. The catalysed reaction is L-citrulline + L-aspartate + ATP = 2-(N(omega)-L-arginino)succinate + AMP + diphosphate + H(+). Its pathway is amino-acid biosynthesis; L-arginine biosynthesis; L-arginine from L-ornithine and carbamoyl phosphate: step 2/3. This chain is Argininosuccinate synthase, found in Bacillus cytotoxicus (strain DSM 22905 / CIP 110041 / 391-98 / NVH 391-98).